The following is a 176-amino-acid chain: Large ribosomal subunit protein uL16 (176 aa).

The protein belongs to the universal ribosomal protein uL16 family.

This Picrophilus torridus (strain ATCC 700027 / DSM 9790 / JCM 10055 / NBRC 100828 / KAW 2/3) protein is Large ribosomal subunit protein uL16.